The following is a 324-amino-acid chain: ATP phosphoribosyltransferase regulatory subunit (324 aa).

The protein belongs to the class-II aminoacyl-tRNA synthetase family. HisZ subfamily. In terms of assembly, heteromultimer composed of HisG and HisZ subunits.

The protein localises to the cytoplasm. It functions in the pathway amino-acid biosynthesis; L-histidine biosynthesis; L-histidine from 5-phospho-alpha-D-ribose 1-diphosphate: step 1/9. Functionally, required for the first step of histidine biosynthesis. May allow the feedback regulation of ATP phosphoribosyltransferase activity by histidine. This is ATP phosphoribosyltransferase regulatory subunit from Carboxydothermus hydrogenoformans (strain ATCC BAA-161 / DSM 6008 / Z-2901).